The chain runs to 274 residues: MHFSKMHGLGNDFVVVDAVTQNVFFPEEVIKKLADRHRGIGFDQLLLVEPPYDPELDFHYRIFNADGSEVAQCGNGARCFARFVTLKGLTNKKDIAVSTAKGRMVLTVKDDGQIRVNMGEPIWEPAKIPFNANKFEKNYILRTDIQTVLCGAVSMGNPHCVIQVEDIKTANVAQLGPLLESHERFPERVNAGFMQVIDRHHIKLRVYERGAGETQACGSGACAAAAVGIMQGLLDSPVQVDLPGGSLIIEWDGEGHPLYMTGDATHIYDGVIKL.

Substrate contacts are provided by N11, Q44, and N64. The Proton donor role is filled by C73. Substrate-binding positions include 74 to 75, N157, N190, and 208 to 209; these read GN and ER. The active-site Proton acceptor is C217. A substrate-binding site is contributed by 218–219; sequence GS.

This sequence belongs to the diaminopimelate epimerase family. As to quaternary structure, homodimer.

The protein resides in the cytoplasm. The enzyme catalyses (2S,6S)-2,6-diaminopimelate = meso-2,6-diaminopimelate. It functions in the pathway amino-acid biosynthesis; L-lysine biosynthesis via DAP pathway; DL-2,6-diaminopimelate from LL-2,6-diaminopimelate: step 1/1. Functionally, catalyzes the stereoinversion of LL-2,6-diaminopimelate (L,L-DAP) to meso-diaminopimelate (meso-DAP), a precursor of L-lysine and an essential component of the bacterial peptidoglycan. The polypeptide is Diaminopimelate epimerase (Actinobacillus succinogenes (strain ATCC 55618 / DSM 22257 / CCUG 43843 / 130Z)).